Consider the following 793-residue polypeptide: MSRRRHSDDSDDSDGQPHKRRRTSEPSEIEERLESLICRVGEKSNSSLESNLEGLAGVLEADLPNYKSKILRILCTVARLLPEKLTVYTTLVGLLNARNYNFGGEFVEAMIRQLKECLKVNMYNEAVHLVRFLSDLVNCHVIAAPSMVAMFENFVSVTQEEDVPQVRCDWYIFAFLSSLPWVGKELYEKKDAEMDRLLSQTESYLKRRQKIHVPMLQVWTADKPHPQEEYLDCLWSQIQKLKKDRWQERHILRPYLAFDSILCEALQHNLPPFTPPPHTEDSVYPMPRVIFRMFDYTDDPEGPVMPGSHSVERFVIEENLHCIIKSHWKERKTCAAQLLSYPGNNKIPLNYHIVEVIFAELFQLPSPPHIEVMYTTLLIELCKLQPGSLPQVLAQATEMLYMRLDTMNTTCVDRFINWFSHHLSNFQFRWSWEDWSDCLTQDLEKPKPKFVREVLEKCMRLSYHQRIIDIVPASFSVLSPANPVCIYKYGDESNRSLPGYTVALCLTIAIKNKASNDEIFSILKDVPNPNQDDDDDEGFTFNPLKIEVFVQTLLHLAAKSFSHSFSALAKFHEVFKTLAESDEGKLHVLRVVYEVWKNHPQMIAVLVDKMIRTQIVDCAAVANWIFSSELAHDFTRFYIWEILHSTIRKMNKHVLKIHKELEDTKARLARQHKRRDSDDDDRSSDREDGPLEEQIERLQEKVESAQSEQKNLFLVIFQRFIMLLTEHLVRCETGGIDVFTPWYKSCIERLQQIFLQHHQIIQQYMVTFENLLFTAELDHHILAVFQQFCALQA.

2 disordered regions span residues 1–30 and 668–692; these read MSRRRHSDDSDDSDGQPHKRRRTSEPSEIE and LARQHKRRDSDDDDRSSDREDGPLE. Positions 30-242 constitute an MIF4G domain; sequence EERLESLICR…CLWSQIQKLK (213 aa). Positions 683–692 are enriched in basic and acidic residues; that stretch reads SSDREDGPLE. A coiled-coil region spans residues 686 to 716; it reads REDGPLEEQIERLQEKVESAQSEQKNLFLVI.

The protein belongs to the NCBP1 family. As to quaternary structure, component of the nuclear cap-binding complex (CBC), a heterodimer composed of NCBP1/CBP80 and NCBP2/CBP20 that interacts with m7GpppG-capped RNA. Component of an alternative nuclear cap-binding complex (CBC) composed of NCBP1/CBP80 and NCBP3.

It is found in the nucleus. The protein localises to the cytoplasm. Functionally, component of the cap-binding complex (CBC), which binds cotranscriptionally to the 5'-cap of pre-mRNAs and is involved in various processes such as pre-mRNA splicing, translation regulation, nonsense-mediated mRNA decay, RNA-mediated gene silencing (RNAi) by microRNAs (miRNAs) and mRNA export. The CBC complex is involved in mRNA export from the nucleus, leading to the recruitment of the mRNA export machinery to the 5'-end of mRNA and to mRNA export in a 5' to 3' direction through the nuclear pore. The CBC complex is also involved in mediating U snRNA and intronless mRNAs export from the nucleus. The CBC complex is essential for a pioneer round of mRNA translation, before steady state translation when the CBC complex is replaced by cytoplasmic cap-binding protein eIF4E. The pioneer round of mRNA translation mediated by the CBC complex plays a central role in nonsense-mediated mRNA decay (NMD), NMD only taking place in mRNAs bound to the CBC complex, but not on eIF4E-bound mRNAs. The CBC complex enhances NMD in mRNAs containing at least one exon-junction complex (EJC), promoting the interaction between UPF1 and UPF2. The CBC complex is also involved in 'failsafe' NMD, which is independent of the EJC complex, while it does not participate in Staufen-mediated mRNA decay (SMD). During cell proliferation, the CBC complex is also involved in microRNAs (miRNAs) biogenesis via its interaction with SRRT/ARS2 and is required for miRNA-mediated RNA interference. The CBC complex also acts as a negative regulator of PARN, thereby acting as an inhibitor of mRNA deadenylation. In the CBC complex, NCBP1/CBP80 does not bind directly capped RNAs (m7GpppG-capped RNA) but is required to stabilize the movement of the N-terminal loop of NCBP2/CBP20 and lock the CBC into a high affinity cap-binding state with the cap structure. Associates with NCBP3 to form an alternative cap-binding complex (CBC) which plays a key role in mRNA export. The conventional CBC with NCBP2 binds both small nuclear RNA (snRNA) and messenger (mRNA) and is involved in their export from the nucleus whereas the alternative CBC with NCBP3 does not bind snRNA and associates only with mRNA thereby playing a role only in mRNA export. The polypeptide is Nuclear cap-binding protein subunit 1 (NCBP1) (Gallus gallus (Chicken)).